A 196-amino-acid polypeptide reads, in one-letter code: Secreted phosphoprotein 24 (196 aa).

Positions 1–19 (MKWCGVLMVALLQSLCCSG) are cleaved as a signal peptide. Cystine bridges form between Cys-83-Cys-94 and Cys-107-Cys-125. The disordered stretch occupies residues 125 to 196 (CGQDSSSSES…RGDSFGNHLE (72 aa)). Residues 129–138 (SSSSESSSEE) show a composition bias toward low complexity.

Belongs to the SPP2 family. Post-translationally, multiply phosphorylated at serine residues.

The protein resides in the secreted. In terms of biological role, could coordinate an aspect of bone turnover. The sequence is that of Secreted phosphoprotein 24 (spp2) from Salmo salar (Atlantic salmon).